The primary structure comprises 2481 residues: Serine/threonine-protein kinase TOR (2481 aa).

Residues 1–31 (MSTSSQSFVAGRPASMASPSQSHRFCGPSAT) are disordered. HEAT repeat units lie at residues 205–242 (VHVP…VIEK), 292–329 (SRYR…FLRD), 373–410 (HYLP…AMGS), 434–471 (DALD…SQAK), 569–607 (RLVE…FDDY), 608–645 (LAQA…KNPA), 737–775 (QYIP…STGY), and 781–819 (KEYP…LDPH). The tract at residues 823 to 847 (RNQQSLSGSHGEVPRGTGDSGQPIP) is disordered. HEAT repeat units follow at residues 866-904 (YYST…SMGL), 908-945 (PYLP…IVRQ), 952-992 (PELL…ALND), 996-1036 (TYLP…GTLD), 1037-1075 (EHMH…CVQV), and 1077-1114 (GHIS…ALGE). The segment at 1179–1204 (DPFEEGTDRNHQVNDGRLRTAGEASQ) is disordered. The segment covering 1184-1198 (GTDRNHQVNDGRLRT) has biased composition (basic and acidic residues). The 579-residue stretch at 1309–1887 (LLGALAEKCR…MYPLLVACKS (579 aa)) folds into the FAT domain. 2 short sequence motifs (nuclear localization signal) span residues 1505–1512 (VRRAKYDE) and 2075–2080 (KQRPRK). One can recognise a PI3K/PI4K catalytic domain in the interval 2065–2378 (FSRQLVVITS…DEDPADIDLP (314 aa)). A G-loop region spans residues 2071–2077 (VITSKQR). A catalytic loop region spans residues 2244–2252 (GLGDRHPSN). The activation loop stretch occupies residues 2264–2289 (HIDFGDCFEASMNREKFPEKVPFRLT). The disordered stretch occupies residues 2354–2384 (NNNPNAPADVEPDEEDEDPADIDLPQPQRST). A compositionally biased stretch (acidic residues) spans 2363 to 2374 (VEPDEEDEDPAD). Ser2424 carries the phosphoserine modification. The FATC domain occupies 2449 to 2481 (HGLSVKVQVQKLINQATSHENLCQNYVGWCPFW).

This sequence belongs to the PI3/PI4-kinase family. Interacts with RAPTOR1 and itself. Interacts with FKBP12 in a rapamycin-dependent manner. Binds to LST8-1. Hyperactivated upon interaction with cauliflower mosaic virus (CaMV) Tav protein. Post-translationally, activated by phosphorylation on Ser-2424 triggered by cauliflower mosaic virus P6 and auxin. Highly expressed in root meristems, shoot apical meristem (SAM) and floral buds.

It is found in the cytoplasm. The protein resides in the nucleus. The enzyme catalyses L-seryl-[protein] + ATP = O-phospho-L-seryl-[protein] + ADP + H(+). The catalysed reaction is L-threonyl-[protein] + ATP = O-phospho-L-threonyl-[protein] + ADP + H(+). With respect to regulation, almost insensitive to rapamycin. Strongly repressed by specific active site inhibitors (asTORis) such as AZD-8055, TORIN2 and WYE-132, and, to a lesser extent, by KU63794, WYE-354 and TORIN1, leading to impaired photoautotrophic growth and abnormally early meristematic cells differentiation. Repression by TORIN1 leads to impaired responses to auxin, including gravitropism. Combined treatment with rapamycin and active-site inhibitors (e.g. Torin1 and AZD-8055) results in synergistic inhibition of activity and plant growth. Inhibition by KU63794 leads to reduced auxin content in root tips. AZD-8055 treatment reduces abscisic acid (ABA) levels. In addition, inhibition by AZD-8055 leads to a strong reduction of watermelon mosaic virus (WMV) infection. Its function is as follows. Essential cell growth regulator that controls development from early embryo to seed production. Controls plant growth in environmental stress conditions. Acts through the phosphorylation of downstream effectors that are recruited by the binding partner RAPTOR. Acts by activating transcription, protein synthesis and ribosome biogenesis, and inhibiting mRNA degradation and autophagy. Can phosphorylate TAP46, a regulatory subunit of protein phosphatase 2A that modulates cell growth and survival. Involved in modulating the transition from heterotrophic to photoautotrophic growth by regulating the expression of chloroplast- and photosynthesis-associated genes. Essential for auxin signaling transduction, probably acting in polysomes to maintain the active ATPK1/S6K1 (and thus TIF3H1/eIF3h) phosphorylation status that is critical for translation reinitiation (e.g. uORF-mRNAs loading). Promotes abscisic acid (ABA) biosynthesis. Involved in the regulation of sugar-mediated (e.g. glucose and sucrose) glycolysis- and mitochondrial bioenergetics-dependent root growth promotion. Required for sugar (e.g. glucose) promotion of hypocotyl elongation in the dark, by activating the brassinosteroid pathway and stabilizing BZR1. The regulation of BZR1 degradation is dependent on autophagy. Regulates the expression, phosphorylation and ribosome association of MRFs (e.g. MRF1, MRF3 and MRF4), especially under energy-deficient conditions. In terms of biological role, (Microbial infection) Binding to cauliflower mosaic virus (CaMV) Tav protein is critical for both translation reinitiation and viral fitness. When activated by CaMV P6, promotes CaMV translation by inhibiting cellular autophagy and suppressing both silencing and innate immunity, thus conferring sensitivity to P.syringae. (Microbial infection) Required during infection by some potyvirus such as Watermelon mosaic virus (WMV) but not for turnip mosaic virus (TuMV). This is Serine/threonine-protein kinase TOR from Arabidopsis thaliana (Mouse-ear cress).